Here is a 363-residue protein sequence, read N- to C-terminus: NAD(P)H-quinone oxidoreductase subunit 1, chloroplastic (363 aa).

8 consecutive transmembrane segments (helical) span residues 30-50 (LFPIFTLVLGITIGVLVIVWL), 98-118 (FSIGPSIAVISIFLSYSVIPF), 127-147 (LSIGVFFWIAISSIAPVGLLM), 165-185 (AAQSISYEIPLALCVLSISLL), 203-223 (FWGWNLWRQPIGFIVFLISSL), 248-268 (YSGIKFGLFYIASYLNLLVSS), 300-320 (VFGTLIGIFITLAKTYLFLFI), and 336-356 (LLNLGWKFLLPISLGNLLLTT).

It belongs to the complex I subunit 1 family. As to quaternary structure, NDH is composed of at least 16 different subunits, 5 of which are encoded in the nucleus.

It is found in the plastid. Its subcellular location is the chloroplast thylakoid membrane. The enzyme catalyses a plastoquinone + NADH + (n+1) H(+)(in) = a plastoquinol + NAD(+) + n H(+)(out). The catalysed reaction is a plastoquinone + NADPH + (n+1) H(+)(in) = a plastoquinol + NADP(+) + n H(+)(out). Functionally, NDH shuttles electrons from NAD(P)H:plastoquinone, via FMN and iron-sulfur (Fe-S) centers, to quinones in the photosynthetic chain and possibly in a chloroplast respiratory chain. The immediate electron acceptor for the enzyme in this species is believed to be plastoquinone. Couples the redox reaction to proton translocation, and thus conserves the redox energy in a proton gradient. The sequence is that of NAD(P)H-quinone oxidoreductase subunit 1, chloroplastic from Nicotiana tomentosiformis (Tobacco).